A 433-amino-acid chain; its full sequence is Glutamate-1-semialdehyde 2,1-aminomutase (433 aa).

Lys266 carries the post-translational modification N6-(pyridoxal phosphate)lysine.

This sequence belongs to the class-III pyridoxal-phosphate-dependent aminotransferase family. HemL subfamily. As to quaternary structure, homodimer. Pyridoxal 5'-phosphate serves as cofactor.

It is found in the cytoplasm. The catalysed reaction is (S)-4-amino-5-oxopentanoate = 5-aminolevulinate. It participates in porphyrin-containing compound metabolism; protoporphyrin-IX biosynthesis; 5-aminolevulinate from L-glutamyl-tRNA(Glu): step 2/2. The polypeptide is Glutamate-1-semialdehyde 2,1-aminomutase (Psychrobacter arcticus (strain DSM 17307 / VKM B-2377 / 273-4)).